The sequence spans 536 residues: SNW domain-containing protein 1 (536 aa).

The segment at 1-46 (MALTSFLPAPTQLSQDQLEAEEKARSQRSRQTSLVSSRREPPPYGY) is disordered. Residue Ala2 is modified to N-acetylalanine. Residue Ser14 is modified to Phosphoserine. Lys23 is covalently cross-linked (Glycyl lysine isopeptide (Lys-Gly) (interchain with G-Cter in SUMO2)). Positions 59–79 (GDGGAFPEIHVAQYPLDMGRK) are interaction with PPIL1. Residues Lys81, Lys97, Lys115, Lys122, Lys141, Lys158, and Lys170 each participate in a glycyl lysine isopeptide (Lys-Gly) (interchain with G-Cter in SUMO2) cross-link. The tract at residues 174-339 (AQYIRYTPSQ…KARERRAGIK (166 aa)) is SNW. Phosphoserine occurs at positions 182 and 190. Lys193 is covalently cross-linked (Glycyl lysine isopeptide (Lys-Gly) (interchain with G-Cter in SUMO2)). Positions 209–233 (PPRFKINKKIPRGPPSPPAPVMHSP) are disordered. 3 positions are modified to phosphoserine: Ser224, Ser232, and Ser234. Residues Lys240, Lys258, Lys286, Lys339, Lys344, Lys416, and Lys441 each participate in a glycyl lysine isopeptide (Lys-Gly) (interchain with G-Cter in SUMO2) cross-link. Residues 311 to 386 (KMAQKEKEKH…RSKLQRNENR (76 aa)) are disordered. Ser446 carries the phosphoserine modification. Residue Lys452 forms a Glycyl lysine isopeptide (Lys-Gly) (interchain with G-Cter in SUMO2) linkage. Composition is skewed to basic and acidic residues over residues 470–489 (NRFV…RGRE) and 503–530 (KFLE…EHEG). Residues 470–536 (NRFVPDKEFS…EHEGKKRRKE (67 aa)) form a disordered region. Ser479 and Ser481 each carry phosphoserine. Residue Lys509 forms a Glycyl lysine isopeptide (Lys-Gly) (interchain with G-Cter in SUMO2) linkage.

The protein belongs to the SNW family. In terms of assembly, identified in the spliceosome C complex. Associates with U4/U6-U5 tri-small nuclear ribonucleoproteins (U4/U6-U5 tri-snRNPs). Component of the minor spliceosome, which splices U12-type introns. Interacts with SKI, SMAD2,SMAD3, RBPJ, RB1, PABPN1, MAGEA1, SIRT1, FOXN3, U2AF2, DAXX and ATP1B4. Interacts with PPIL1. Interacts with VDR and RXRA; preferentially associates with VDR:RXRA heterodimers. Interacts with NCOR2. Interacts with MAML1. Interacts with NOTCH1 NICD; the interaction involves multimerized NOTCH1 NICD. Forms a complex with NOTCH1 NICD and MAML1; the association is dissociated by RBPJ. Associates with positive transcription elongation factor b (P-TEFb). Component of the SNARP complex which consists at least of SNIP1, SNW1, THRAP3, BCLAF1 and PNN. (Microbial infection) Interacts with human papillomavirus type-16 (HPV16) E7 protein. As to quaternary structure, (Microbial infection) Interacts with EBV EBNA2; EBNA2 competes with NCOR2 for interaction with SNW1.

It localises to the nucleus. Functionally, involved in pre-mRNA splicing as component of the spliceosome. As a component of the minor spliceosome, involved in the splicing of U12-type introns in pre-mRNAs. Required for the specific splicing of CDKN1A pre-mRNA; the function probably involves the recruitment of U2AF2 to the mRNA. May recruit PPIL1 to the spliceosome. May be involved in cyclin-D1/CCND1 mRNA stability through the SNARP complex which associates with both the 3'end of the CCND1 gene and its mRNA. Involved in transcriptional regulation. Modulates TGF-beta-mediated transcription via association with SMAD proteins, MYOD1-mediated transcription via association with PABPN1, RB1-mediated transcriptional repression, and retinoid-X receptor (RXR)- and vitamin D receptor (VDR)-dependent gene transcription in a cell line-specific manner probably involving coactivators NCOA1 and GRIP1. Is involved in NOTCH1-mediated transcriptional activation. Binds to multimerized forms of Notch intracellular domain (NICD) and is proposed to recruit transcriptional coactivators such as MAML1 to form an intermediate preactivation complex which associates with DNA-bound CBF-1/RBPJ to form a transcriptional activation complex by releasing SNW1 and redundant NOTCH1 NICD. Its function is as follows. (Microbial infection) Is recruited by HIV-1 Tat to Tat:P-TEFb:TAR RNA complexes and is involved in Tat transcription by recruitment of MYC, MEN1 and TRRAP to the HIV promoter. In terms of biological role, (Microbial infection) Proposed to be involved in transcriptional activation by EBV EBNA2 of CBF-1/RBPJ-repressed promoters. This Homo sapiens (Human) protein is SNW domain-containing protein 1 (SNW1).